The following is an 81-amino-acid chain: Short neurotoxin 1 (81 aa).

The N-terminal stretch at Met-1–Thr-21 is a signal peptide. 4 disulfide bridges follow: Cys-24–Cys-43, Cys-38–Cys-60, Cys-62–Cys-73, and Cys-74–Cys-79.

This sequence belongs to the three-finger toxin family. Short-chain subfamily. Type I alpha-neurotoxin sub-subfamily. Expressed by the venom gland.

The protein resides in the secreted. Its function is as follows. Binds to muscle nicotinic acetylcholine receptor (nAChR) and inhibit acetylcholine from binding to the receptor, thereby impairing neuromuscular transmission. This Hydrophis peronii (Spiny-headed seasnake) protein is Short neurotoxin 1.